Reading from the N-terminus, the 107-residue chain is Iron-sulfur cluster assembly protein CyaY (107 aa).

It belongs to the frataxin family.

In terms of biological role, involved in iron-sulfur (Fe-S) cluster assembly. May act as a regulator of Fe-S biogenesis. The sequence is that of Iron-sulfur cluster assembly protein CyaY from Neisseria meningitidis serogroup C / serotype 2a (strain ATCC 700532 / DSM 15464 / FAM18).